The primary structure comprises 105 residues: Large ribosomal subunit protein uL24 (105 aa).

Belongs to the universal ribosomal protein uL24 family. In terms of assembly, part of the 50S ribosomal subunit.

One of two assembly initiator proteins, it binds directly to the 5'-end of the 23S rRNA, where it nucleates assembly of the 50S subunit. Functionally, one of the proteins that surrounds the polypeptide exit tunnel on the outside of the subunit. The sequence is that of Large ribosomal subunit protein uL24 from Xanthomonas campestris pv. campestris (strain 8004).